We begin with the raw amino-acid sequence, 453 residues long: Kynureninase (453 aa).

Residues L114, T115, 142–145 (FPSD), D232, H235, and Y257 each bind pyridoxal 5'-phosphate. Residue K258 is modified to N6-(pyridoxal phosphate)lysine. W286 contacts pyridoxal 5'-phosphate.

The protein belongs to the kynureninase family. As to quaternary structure, homodimer. Pyridoxal 5'-phosphate is required as a cofactor.

The protein localises to the cytoplasm. The enzyme catalyses L-kynurenine + H2O = anthranilate + L-alanine + H(+). The catalysed reaction is 3-hydroxy-L-kynurenine + H2O = 3-hydroxyanthranilate + L-alanine + H(+). It functions in the pathway amino-acid degradation; L-kynurenine degradation; L-alanine and anthranilate from L-kynurenine: step 1/1. Its pathway is cofactor biosynthesis; NAD(+) biosynthesis; quinolinate from L-kynurenine: step 2/3. Catalyzes the cleavage of L-kynurenine (L-Kyn) and L-3-hydroxykynurenine (L-3OHKyn) into anthranilic acid (AA) and 3-hydroxyanthranilic acid (3-OHAA), respectively. The protein is Kynureninase of Cryptococcus neoformans var. neoformans serotype D (strain B-3501A) (Filobasidiella neoformans).